The chain runs to 256 residues: Protein FixA (256 aa).

Belongs to the ETF beta-subunit/FixA family. Heterodimer of FixA and FixB.

It participates in amine and polyamine metabolism; carnitine metabolism. Functionally, required for anaerobic carnitine reduction. May bring reductant to CaiA. In Salmonella paratyphi B (strain ATCC BAA-1250 / SPB7), this protein is Protein FixA.